A 467-amino-acid chain; its full sequence is Chromosomal replication initiator protein DnaA (467 aa).

The tract at residues 1-79 (MTELDQFWPA…GELPVELRLG (79 aa)) is domain I, interacts with DnaA modulators. Residues 79–129 (GAPTARPAAPVAGNSQPKAKEPAKAAASAPAAPSPAKQAAVKAIGGSHEST) are domain II. The disordered stretch occupies residues 84–126 (RPAAPVAGNSQPKAKEPAKAAASAPAAPSPAKQAAVKAIGGSH). The span at 102–121 (KAAASAPAAPSPAKQAAVKA) shows a compositional bias: low complexity. The tract at residues 130–347 (RLNPSFTFDT…GALKRVVAYA (218 aa)) is domain III, AAA+ region. Gly-175, Gly-177, Lys-178, and Thr-179 together coordinate ATP. The tract at residues 348–467 (RFTSQNITLE…YEALLSMLRN (120 aa)) is domain IV, binds dsDNA.

Belongs to the DnaA family. As to quaternary structure, oligomerizes as a right-handed, spiral filament on DNA at oriC.

The protein localises to the cytoplasm. Functionally, plays an essential role in the initiation and regulation of chromosomal replication. ATP-DnaA binds to the origin of replication (oriC) to initiate formation of the DNA replication initiation complex once per cell cycle. Binds the DnaA box (a 9 base pair repeat at the origin) and separates the double-stranded (ds)DNA. Forms a right-handed helical filament on oriC DNA; dsDNA binds to the exterior of the filament while single-stranded (ss)DNA is stabiized in the filament's interior. The ATP-DnaA-oriC complex binds and stabilizes one strand of the AT-rich DNA unwinding element (DUE), permitting loading of DNA polymerase. After initiation quickly degrades to an ADP-DnaA complex that is not apt for DNA replication. Binds acidic phospholipids. The protein is Chromosomal replication initiator protein DnaA of Chromobacterium violaceum (strain ATCC 12472 / DSM 30191 / JCM 1249 / CCUG 213 / NBRC 12614 / NCIMB 9131 / NCTC 9757 / MK).